The sequence spans 86 residues: Anti-adapter protein IraP (86 aa).

Residues 1 to 38 are a coiled coil; it reads MKNLIAELLVKLAQKEEEAKELTVQVEALEIVVTALLR.

It belongs to the IraP family. In terms of assembly, interacts with RssB.

It localises to the cytoplasm. Functionally, inhibits RpoS proteolysis by regulating RssB activity, thereby increasing the stability of the sigma stress factor RpoS especially during phosphate starvation, but also in stationary phase and during nitrogen starvation. Its effect on RpoS stability is due to its interaction with RssB, which probably blocks the interaction of RssB with RpoS, and the consequent delivery of the RssB-RpoS complex to the ClpXP protein degradation pathway. This is Anti-adapter protein IraP from Klebsiella pneumoniae (strain 342).